Here is a 200-residue protein sequence, read N- to C-terminus: Large ribosomal subunit protein bL25 (200 aa).

Belongs to the bacterial ribosomal protein bL25 family. CTC subfamily. As to quaternary structure, part of the 50S ribosomal subunit; part of the 5S rRNA/L5/L18/L25 subcomplex. Contacts the 5S rRNA. Binds to the 5S rRNA independently of L5 and L18.

In terms of biological role, this is one of the proteins that binds to the 5S RNA in the ribosome where it forms part of the central protuberance. This Pseudomonas fluorescens (strain Pf0-1) protein is Large ribosomal subunit protein bL25.